The chain runs to 1943 residues: Cadherin-86C (1943 aa).

A disordered region spans residues 1-102 (MASTSSSQPE…QNQQMQHHWP (102 aa)). The Extracellular portion of the chain corresponds to 1–934 (MASTSSSQPE…TDTQYKAENK (934 aa)). An N-linked (GlcNAc...) asparagine glycan is attached at N12. Basic residues predominate over residues 50-89 (PHHHHHHHHQHHHHHRLKQHHRHHHHHHRLQHHHHHHQQQ). Residues 90–100 (HNHQNQQMQHH) show a composition bias toward low complexity. 5 Cadherin domains span residues 238–366 (CSIT…PPVF), 367–483 (TSAP…PPYF), 484–600 (ENDH…APVF), 601–708 (EQPA…TPIF), and 709–832 (DKDL…SVKF). N-linked (GlcNAc...) asparagine glycans are attached at residues N244, N419, N531, N579, N585, N612, and N645. N-linked (GlcNAc...) asparagine glycosylation is present at N912. Residues 935 to 955 (VLFWLLILLATLVALTILILL) traverse the membrane as a helical segment. The Cytoplasmic segment spans residues 956 to 1943 (LCCICSWCPL…NSGGESPQYS (988 aa)). 5 disordered regions span residues 1038–1058 (DVGR…SAEE), 1390–1442 (KPSR…RKRI), 1458–1516 (EEEE…SHNR), 1546–1695 (YKHS…ERNV), and 1707–1895 (KSSV…DDHD). Positions 1047–1058 (EGDRRHIQSAEE) are enriched in basic and acidic residues. The segment covering 1426 to 1442 (IKRRRTKKRPRQPRKRI) has biased composition (basic residues). Composition is skewed to basic and acidic residues over residues 1486–1497 (QLSDESRKDQSR) and 1507–1516 (HRSESDSHNR). Over residues 1552–1568 (DFDEDDTEYSIDSDGDE) the composition is skewed to acidic residues. The segment covering 1580–1602 (QENERYRRQERTYAEPENPVDRK) has biased composition (basic and acidic residues). Polar residues predominate over residues 1633–1667 (KQTSSEPPHNRVSISKYESTVTENGRKLMSTSTEI). Residues 1709–1724 (SVSGRTSTESSKSQPS) are compositionally biased toward low complexity. 4 stretches are compositionally biased toward basic and acidic residues: residues 1754-1764 (TGGRYKPEPAP), 1774-1793 (LLKE…ETDT), 1800-1810 (HSEHRFERENA), and 1837-1863 (KESK…ENEV). The span at 1879 to 1889 (HPTQKQLNAST) shows a compositional bias: polar residues.

As cell intercalation proceeds, a row of stigmatophore cells surrounding the spiracular chamber show expression of Cad86C. Expression is regulated by the Abd-B cascade, requiring sal. Expressed in a broad region of the morphogenetic furrow and in clusters of cells posterior to the morphogenetic furrow. Weakly expressed in the epithelium of wing imaginal disks. In eye imaginal disk cells within the morphogenetic furrow, expression is localized to the apical region.

The protein localises to the cell membrane. Its function is as follows. Cadherins are calcium-dependent cell adhesion proteins. They preferentially interact with themselves in a homophilic manner in connecting cells. This Drosophila melanogaster (Fruit fly) protein is Cadherin-86C (Cad86C).